The following is a 142-amino-acid chain: ATP synthase epsilon chain (142 aa).

Belongs to the ATPase epsilon chain family. As to quaternary structure, F-type ATPases have 2 components, CF(1) - the catalytic core - and CF(0) - the membrane proton channel. CF(1) has five subunits: alpha(3), beta(3), gamma(1), delta(1), epsilon(1). CF(0) has three main subunits: a, b and c.

The protein localises to the cell inner membrane. Functionally, produces ATP from ADP in the presence of a proton gradient across the membrane. The sequence is that of ATP synthase epsilon chain from Shewanella putrefaciens (strain CN-32 / ATCC BAA-453).